A 323-amino-acid polypeptide reads, in one-letter code: UPF0612 protein C569.01c (323 aa).

Coiled coils occupy residues 27 to 63 (IKRY…MKYE) and 131 to 225 (NEMN…DARS).

This sequence belongs to the UPF0612 family.

The sequence is that of UPF0612 protein C569.01c from Schizosaccharomyces pombe (strain 972 / ATCC 24843) (Fission yeast).